Reading from the N-terminus, the 428-residue chain is Dihydroorotase (428 aa).

2 residues coordinate Zn(2+): H56 and H58. Substrate-binding positions include 58 to 60 (HLR) and N90. 3 residues coordinate Zn(2+): D150, H177, and H230. N276 lines the substrate pocket. D303 provides a ligand contact to Zn(2+). D303 is a catalytic residue. Position 307 (H307) interacts with substrate.

The protein belongs to the metallo-dependent hydrolases superfamily. DHOase family. Class I DHOase subfamily. Zn(2+) serves as cofactor.

It catalyses the reaction (S)-dihydroorotate + H2O = N-carbamoyl-L-aspartate + H(+). It functions in the pathway pyrimidine metabolism; UMP biosynthesis via de novo pathway; (S)-dihydroorotate from bicarbonate: step 3/3. Catalyzes the reversible cyclization of carbamoyl aspartate to dihydroorotate. This Streptomyces coelicolor (strain ATCC BAA-471 / A3(2) / M145) protein is Dihydroorotase.